The primary structure comprises 477 residues: Homeobox protein Meis2 (477 aa).

Residues 71–191 (DALKRDKDAI…KMPIDLVIDE (121 aa)) are required for interaction with PBX1. The region spanning 110-193 (GGDVCSSDSF…PIDLVIDERD (84 aa)) is the MEIS N-terminal domain. A compositionally biased stretch (basic and acidic residues) spans 193-203 (DGSSKSDHEEL). The interval 193-283 (DGSSKSDHEE…KKRQKKRGIF (91 aa)) is disordered. Polar residues-rich tracts occupy residues 204 to 217 (SGSS…NPSS) and 239 to 251 (GHAS…SSEQ). Positions 276-338 (RQKKRGIFPK…NARRRIVQPM (63 aa)) form a DNA-binding region, homeobox; TALE-type. The tract at residues 299–333 (LTHPYPSEEQKKQLAQDTGLTILQVNNWFINARRR) is interaction with DNA. The interval 340 to 477 (DQSNRAGFLL…GGQVMDIHAQ (138 aa)) is transcriptional activation domain.

The protein belongs to the TALE/MEIS homeobox family. As to quaternary structure, monomer and homodimer. Heterodimer with HOXB13. Isoform 2 interacts with TLX1. Isoform 3 interacts with HOXA13 and PBX1 isoform PBX1b. Isoform 4 interacts with SP1, SP3 and KLF4. Isoform 4 and isoform 5 interact with PBX1 isoform PBX1a; the interaction partially relieves MEIS2 autoinhibition. Isoform 3 also known as MEIS2b is part of a PDX1:PBX1b:Meis2B complex; Meis2B is recruited by PBX1b and can be replaced by isoform 4 in a small fraction of complexes. Can form trimeric complexes including HOXB8 and PBX2 or PBX3. As to expression, expressed in various tissues. Expressed at high level in the lymphoid organs of hematopoietic tissues. Also expressed in some regions of the brain, such as the putamen.

The protein resides in the nucleus. It is found in the cytoplasm. The protein localises to the perinuclear region. Its function is as follows. Involved in transcriptional regulation. Binds to HOX or PBX proteins to form dimers, or to a DNA-bound dimer of PBX and HOX proteins and thought to have a role in stabilization of the homeoprotein-DNA complex. Isoform 3 is required for the activity of a PDX1:PBX1b:MEIS2b complex in pancreatic acinar cells involved in the transcriptional activation of the ELA1 enhancer; the complex binds to the enhancer B element and cooperates with the transcription factor 1 complex (PTF1) bound to the enhancer A element; MEIS2 is not involved in complex DNA-binding. Probably in complex with PBX1, is involved in transcriptional regulation by KLF4. Isoform 3 and isoform 4 can bind to a EPHA8 promoter sequence containing the DNA motif 5'-CGGTCA-3'; in cooperation with a PBX protein (such as PBX2) is proposed to be involved in the transcriptional activation of EPHA8 in the developing midbrain. May be involved in regulation of myeloid differentiation. Can bind to the DNA sequence 5'-TGACAG-3'in the activator ACT sequence of the D(1A) dopamine receptor (DRD1) promoter and activate DRD1 transcription; isoform 5 cannot activate DRD1 transcription. The polypeptide is Homeobox protein Meis2 (MEIS2) (Homo sapiens (Human)).